We begin with the raw amino-acid sequence, 63 residues long: Beta-defensin 4 (63 aa).

Positions 1–22 (MRIHYLLFSFLLVLLSPLSAFT) are cleaved as a signal peptide. The residue at position 23 (Gln-23) is a Pyrrolidone carboxylic acid. 3 disulfide bridges follow: Cys-31–Cys-59, Cys-38–Cys-52, and Cys-42–Cys-60.

This sequence belongs to the beta-defensin family. Highly expressed in lung.

It is found in the secreted. In terms of biological role, exhibits antimicrobial activity against Gram-negative bacteria and Gram-positive bacteria. May act as a ligand for C-C chemokine receptor CCR6. Binds to CCR6 and induces chemotactic activity of CCR6-expressing cells. The protein is Beta-defensin 4 (Defb4) of Rattus norvegicus (Rat).